Here is a 759-residue protein sequence, read N- to C-terminus: Glycerol-3-phosphate O-acyltransferase 1 (759 aa).

Over 1–48 (MPAPKLTEKFASSKSTQKTTNYSSIEAKSVKTSADQAYIYQEPSATKK) the chain is Lumenal. The chain crosses the membrane as a helical span at residues 49–69 (ILYSIATWLLYNIFHCFFREI). At 70–434 (RGRGSFKVPQ…AKVNFAKNLG (365 aa)) the chain is on the cytoplasmic side. The HXXXXD motif signature appears at 414–419 (HYNLPD). Residues 435–449 (LVFFRSIGLCILFSL) traverse the membrane as a helical segment. Position 450 (Ala450) is a topological domain, lumenal. The helical transmembrane segment at 451–465 (MPGIIMFSPVFILAK) threads the bilayer. Over 466 to 493 (RISQEKARTALSKSTVKIKANDVIATWK) the chain is Cytoplasmic. A helical transmembrane segment spans residues 494–514 (ILIGMGFAPLLYIFWSVLITY). Topologically, residues 515–523 (YLRHKPWNK) are lumenal. Residues 524–544 (IYVFSGSYISCVIVTYSALIV) traverse the membrane as a helical segment. The Cytoplasmic segment spans residues 545–759 (GDIGMDGFKS…EEEEGKEGDA (215 aa)). Disordered stretches follow at residues 613–667 (EEDR…SLVN), 684–705 (RKSE…EFEV), and 729–759 (IGEN…EGDA). Over residues 647 to 659 (RDNHDAYEHHNQD) the composition is skewed to basic and acidic residues. Over residues 688–702 (SSLASTSVAPSSSSE) the composition is skewed to low complexity. Acidic residues predominate over residues 736-759 (EEEEEEEEEEEEEEEEEEGKEGDA).

It belongs to the GPAT/DAPAT family.

The protein resides in the endoplasmic reticulum membrane. The enzyme catalyses sn-glycerol 3-phosphate + an acyl-CoA = a 1-acyl-sn-glycero-3-phosphate + CoA. The catalysed reaction is dihydroxyacetone phosphate + an acyl-CoA = a 1-acylglycerone 3-phosphate + CoA. It catalyses the reaction sn-glycerol 3-phosphate + hexadecanoyl-CoA = 1-hexadecanoyl-sn-glycero-3-phosphate + CoA. It carries out the reaction (9Z)-hexadecenoyl-CoA + sn-glycerol 3-phosphate = 1-(9Z-hexadecenoyl)-sn-glycero-3-phosphate + CoA. The enzyme catalyses sn-glycerol 3-phosphate + octadecanoyl-CoA = 1-octadecanoyl-sn-glycero-3-phosphate + CoA. The catalysed reaction is sn-glycerol 3-phosphate + (9Z)-octadecenoyl-CoA = 1-(9Z-octadecenoyl)-sn-glycero-3-phosphate + CoA. It participates in phospholipid metabolism; CDP-diacylglycerol biosynthesis; CDP-diacylglycerol from sn-glycerol 3-phosphate: step 1/3. In terms of biological role, dual substrate-specific glycerol-3-phosphate/dihydroxyacetone phosphate sn-1 acyltransferase, catalyzing the first and committed reaction in the de novo synthesis of glycerophospholipids and triacylglycerols (TAGs). Prefers Gly-3-P over dihydroxyacetone phosphate and has a marked preference for 16-carbon fatty acyl chains. Transfers a fatty acid from fatty acyl-CoA to the sn-1 position of glycerol-3-phosphate to produce lysophosphatidic acid (LysoPA). These lipids not only are precursors of glycerolipids, but also are dynamic components of signal transduction systems that control cell physiology. SCT1 is the primary supplier of diacylglycerols (DAG), used mainly in TAG synthesis and phosphatidylcholine (PC) synthesis through the CDP-choline pathway. Regulates fatty acid desaturation, that is, the ratio of unsaturated versus saturated fatty acyl chains, by competing with the desaturase OLE1 for the common substrate C16:0-CoA. Sequesters C16:0-CoA into lipids, thereby shielding it from desaturation by OLE1. The polypeptide is Glycerol-3-phosphate O-acyltransferase 1 (Saccharomyces cerevisiae (strain ATCC 204508 / S288c) (Baker's yeast)).